The chain runs to 475 residues: Ribulose bisphosphate carboxylase large chain (475 aa).

Positions 1–2 (MS) are excised as a propeptide. At P3 the chain carries N-acetylproline. The residue at position 14 (K14) is an N6,N6,N6-trimethyllysine. The active-site Proton acceptor is K175. D-ribulose 1,5-bisphosphate is bound by residues K175 and K177. 3 residues coordinate Mg(2+): K201, D203, and E204. Position 201 is an N6-carboxylysine (K201). Residue E204 coordinates D-ribulose 1,5-bisphosphate. H294 (proton acceptor) is an active-site residue. D-ribulose 1,5-bisphosphate-binding residues include R295, H327, K334, S379, G381, G403, and G404.

It belongs to the RuBisCO large chain family. Type I subfamily. As to quaternary structure, heterohexadecamer of 8 large chains and 8 small chains. Heterohexadecamer; disulfide-linked. The disulfide link is formed within the large subunit homodimers. The cofactor is Mg(2+). The disulfide bond which can form in the large chain dimeric partners within the hexadecamer appears to be associated with oxidative stress and protein turnover.

The protein resides in the plastid. The protein localises to the chloroplast. The catalysed reaction is 2 (2R)-3-phosphoglycerate + 2 H(+) = D-ribulose 1,5-bisphosphate + CO2 + H2O. It catalyses the reaction D-ribulose 1,5-bisphosphate + O2 = 2-phosphoglycolate + (2R)-3-phosphoglycerate + 2 H(+). In terms of biological role, ruBisCO catalyzes two reactions: the carboxylation of D-ribulose 1,5-bisphosphate, the primary event in carbon dioxide fixation, as well as the oxidative fragmentation of the pentose substrate in the photorespiration process. Both reactions occur simultaneously and in competition at the same active site. Binds to abscisic acid (ABA); only half of the possible binding sites are occupied in the crystal and there are indications this is a low affinity site. The sequence is that of Ribulose bisphosphate carboxylase large chain from Pisum sativum (Garden pea).